A 426-amino-acid polypeptide reads, in one-letter code: Chaperone SurA (426 aa).

The N-terminal stretch at 1-13 (MLGALFLGTAANA) is a signal peptide. PpiC domains lie at 164-265 (SEEL…KLLE) and 274-373 (RDEV…EVLG).

It is found in the periplasm. It catalyses the reaction [protein]-peptidylproline (omega=180) = [protein]-peptidylproline (omega=0). Functionally, chaperone involved in the correct folding and assembly of outer membrane proteins. Recognizes specific patterns of aromatic residues and the orientation of their side chains, which are found more frequently in integral outer membrane proteins. May act in both early periplasmic and late outer membrane-associated steps of protein maturation. The protein is Chaperone SurA of Pseudomonas fluorescens (strain Pf0-1).